A 347-amino-acid chain; its full sequence is GMP reductase (347 aa).

108–131 contacts NADP(+); the sequence is ADFAKTAQILALNPALNFVCIDVA. Positions 181 and 183 each coordinate K(+). The Thioimidate intermediate role is filled by cysteine 186. 216–239 provides a ligand contact to NADP(+); sequence IVSDGGCTMPGDVAKAFGGGADFV.

Belongs to the IMPDH/GMPR family. GuaC type 1 subfamily. Homotetramer.

The catalysed reaction is IMP + NH4(+) + NADP(+) = GMP + NADPH + 2 H(+). Its function is as follows. Catalyzes the irreversible NADPH-dependent deamination of GMP to IMP. It functions in the conversion of nucleobase, nucleoside and nucleotide derivatives of G to A nucleotides, and in maintaining the intracellular balance of A and G nucleotides. The polypeptide is GMP reductase (Salmonella arizonae (strain ATCC BAA-731 / CDC346-86 / RSK2980)).